We begin with the raw amino-acid sequence, 70 residues long: MQVLVRDNNVDQALRALKKKMQREGIFREMKMRDFYEKPSQKRAREKAEAVRRVRKLARKRAQREGIVAR.

This sequence belongs to the bacterial ribosomal protein bS21 family.

The protein is Small ribosomal subunit protein bS21B (rpsU2) of Rhizobium meliloti (strain 1021) (Ensifer meliloti).